The primary structure comprises 204 residues: Probable dTDP-4-oxo-2,6-dideoxy-D-glucose 3,5-epimerase (204 aa).

Residues R21, E26, Q45–N47, K70, and H117 each bind substrate. Catalysis depends on Y130, which acts as the Proton donor. E141 contributes to the substrate binding site. Positions V164–P204 are disordered.

It belongs to the dTDP-4-dehydrorhamnose 3,5-epimerase family.

It functions in the pathway antibiotic biosynthesis. Functionally, involved in the biosynthesis of one of the two 2,6-deoxysugars, dTDP-L-oleandrose, attached to the macrolactone ring oleandolide to produce the aglycone antibiotic oleandomycin. Probably catalyzes the conversion of dTDP-4-keto-2,6-dideoxy-alpha-D-glucose to dTDP-4-keto-2,6-dideoxy-beta-L-galactose. The chain is Probable dTDP-4-oxo-2,6-dideoxy-D-glucose 3,5-epimerase from Streptomyces antibioticus.